A 404-amino-acid chain; its full sequence is Propionate kinase (404 aa).

The protein belongs to the acetokinase family. PduW subfamily.

It localises to the cytoplasm. The enzyme catalyses propanoate + ATP = propanoyl phosphate + ADP. It functions in the pathway polyol metabolism; 1,2-propanediol degradation. Functionally, works with phosphate acetyltransferase (pta) to capture exogenous propionate and regenerate propionyl-CoA during degradation of 1,2-propanediol (1,2-PD). The sequence is that of Propionate kinase from Klebsiella pneumoniae subsp. pneumoniae (strain ATCC 700721 / MGH 78578).